The chain runs to 697 residues: Glycine--tRNA ligase beta subunit (697 aa).

The protein belongs to the class-II aminoacyl-tRNA synthetase family. As to quaternary structure, tetramer of two alpha and two beta subunits.

The protein localises to the cytoplasm. It catalyses the reaction tRNA(Gly) + glycine + ATP = glycyl-tRNA(Gly) + AMP + diphosphate. This is Glycine--tRNA ligase beta subunit from Cereibacter sphaeroides (strain ATCC 17029 / ATH 2.4.9) (Rhodobacter sphaeroides).